A 90-amino-acid polypeptide reads, in one-letter code: MASPLDQAIGLLIGIFHKYSGKEGDKHTLSKKELKELIQKELTIGSKLQDAEIVKLMDDLDRNKDQEVNFQEYITFLGALAMIYNEALKG.

EF-hand domains follow at residues 12 to 47 (LIGI…IGSK) and 48 to 83 (LQDA…LAMI). Ca(2+) contacts are provided by threonine 28 and glutamate 33. Lysine 40 is subject to N6-acetyllysine. Serine 46 is modified (phosphoserine). Lysine 47 carries the post-translational modification N6-acetyllysine; alternate. Lysine 47 is subject to N6-succinyllysine; alternate. The Ca(2+) site is built by aspartate 61, asparagine 63, aspartate 65, glutamate 67, and glutamate 72.

The protein belongs to the S-100 family. As to quaternary structure, homodimer; head to tail assembly of 2 subunits. Interacts with CACYBP in a calcium-dependent manner. Interacts with ANXA2 and ANXA11 (via N-terminus). Interacts with SUGT1. Interacts with TP53; has higher affinity for TP53 that is phosphorylated on its N-terminal domain, and lower affinity for TP53 that is phosphorylated on its C-terminal domain. Interacts with tropomyosin. Interacts with FKBP4. Interacts with PPP5C (via TPR repeats); the interaction is calcium-dependent and modulates PPP5C activity. Interacts with TPPP; this interaction inhibits TPPP dimerization.

It is found in the nucleus envelope. The protein localises to the cytoplasm. The protein resides in the cell membrane. Its function is as follows. May function as calcium sensor and modulator, contributing to cellular calcium signaling. May function by interacting with other proteins, such as TPR-containing proteins, and indirectly play a role in many physiological processes such as the reorganization of the actin cytoskeleton and in cell motility. Binds 2 calcium ions. Calcium binding is cooperative. This chain is Protein S100-A6 (S100A6), found in Oryctolagus cuniculus (Rabbit).